Consider the following 400-residue polypeptide: Argininosuccinate synthase (400 aa).

8-16 (AYSGGLDTS) contacts ATP. L-citrulline-binding residues include Y87 and S92. Residue G117 coordinates ATP. L-aspartate-binding residues include T119, N123, and D124. Position 123 (N123) interacts with L-citrulline. R127, S175, E259, and Y271 together coordinate L-citrulline.

This sequence belongs to the argininosuccinate synthase family. Type 1 subfamily. Homotetramer.

The protein resides in the cytoplasm. It carries out the reaction L-citrulline + L-aspartate + ATP = 2-(N(omega)-L-arginino)succinate + AMP + diphosphate + H(+). Its pathway is amino-acid biosynthesis; L-arginine biosynthesis; L-arginine from L-ornithine and carbamoyl phosphate: step 2/3. This is Argininosuccinate synthase from Parafrankia sp. (strain EAN1pec).